A 482-amino-acid chain; its full sequence is 6-phosphogluconate dehydrogenase, decarboxylating (482 aa).

Residues 17 to 22 (GLAVMG), 40 to 42 (NRS), 82 to 84 (VKA), and asparagine 110 each bind NADP(+). Substrate is bound by residues asparagine 110 and 136–138 (SGG). Residue lysine 193 is the Proton acceptor of the active site. 196–197 (HN) contributes to the substrate binding site. Glutamate 200 serves as the catalytic Proton donor. Tyrosine 201, lysine 272, arginine 299, arginine 457, and histidine 463 together coordinate substrate.

The protein belongs to the 6-phosphogluconate dehydrogenase family. Homodimer.

The catalysed reaction is 6-phospho-D-gluconate + NADP(+) = D-ribulose 5-phosphate + CO2 + NADPH. The protein operates within carbohydrate degradation; pentose phosphate pathway; D-ribulose 5-phosphate from D-glucose 6-phosphate (oxidative stage): step 3/3. Functionally, catalyzes the oxidative decarboxylation of 6-phosphogluconate to ribulose 5-phosphate and CO(2), with concomitant reduction of NADP to NADPH. The sequence is that of 6-phosphogluconate dehydrogenase, decarboxylating (gnd) from Synechocystis sp. (strain ATCC 27184 / PCC 6803 / Kazusa).